We begin with the raw amino-acid sequence, 338 residues long: MSATAVPKAKRIPQWKIEEVEYLTTLFKSYPVFAIADLTGFPTNQLQKLRKKLSKKVLFRVSKNKLILRALRNAGIDTSKFEELLTGQNLLLFTHMNAFELSLLLDKYKAKTYYKPGEIAQQEIVIPEGNTGLSPGPILSTFSKLKIPTRIQGNSIVITRDTVVAKPGDTISEELASLLQRLDIALKEVKINIKAAYDHGIIILRDQLVLDLEEYKNMVMNAHLDALKIGSEIAWPVPEILELSLNKAFRQALALAAEAGYVTPDTAEYVFRAAIMKALALAAEVSKYAPDLGLEVPTIQPTTPPEKKEEEEKKEEEEEEAETVSEEELAEGLGALFG.

A disordered region spans residues 295–338; sequence EVPTIQPTTPPEKKEEEEKKEEEEEEAETVSEEELAEGLGALFG. Residues 312-330 show a composition bias toward acidic residues; sequence EKKEEEEEEAETVSEEELA.

The protein belongs to the universal ribosomal protein uL10 family. In terms of assembly, part of the 50S ribosomal subunit. Forms part of the ribosomal stalk which helps the ribosome interact with GTP-bound translation factors. Forms a heptameric L10(L12)2(L12)2(L12)2 complex, where L10 forms an elongated spine to which the L12 dimers bind in a sequential fashion.

Forms part of the ribosomal stalk, playing a central role in the interaction of the ribosome with GTP-bound translation factors. This Staphylothermus marinus (strain ATCC 43588 / DSM 3639 / JCM 9404 / F1) protein is Large ribosomal subunit protein uL10.